The following is a 420-amino-acid chain: Histidine--tRNA ligase (420 aa).

It belongs to the class-II aminoacyl-tRNA synthetase family. As to quaternary structure, homodimer.

The protein localises to the cytoplasm. The enzyme catalyses tRNA(His) + L-histidine + ATP = L-histidyl-tRNA(His) + AMP + diphosphate + H(+). The polypeptide is Histidine--tRNA ligase (Ureaplasma parvum serovar 3 (strain ATCC 27815 / 27 / NCTC 11736)).